The following is a 119-amino-acid chain: Small ribosomal subunit protein uS13m (119 aa).

It belongs to the universal ribosomal protein uS13 family. As to quaternary structure, part of the small ribosomal subunit.

The protein resides in the mitochondrion. Located at the top of the head of the small subunit, it contacts several helices of the small subunit rRNA. The chain is Small ribosomal subunit protein uS13m (RPS13) from Acanthamoeba castellanii (Amoeba).